We begin with the raw amino-acid sequence, 212 residues long: MNLLIMGLPGAGKGTQAAKIVEEFGVAHISTGDMFRAAMANQTEMGRLAKSYIDKGELVPDEVTNGIVKERLAEDDIAEKGFLLDGYPRTIEQAHALDATLEELGLRLDGVINIKVDPSCLVERLSGRIINRKTGETFHKVFNPPVDYKEEDYYQREDDKPETVKRRLDVNMAQGEPILEHYRKLGLVTDIEGNQEITDVFADVEKALLELK.

10-15 contributes to the ATP binding site; the sequence is GAGKGT. The interval 30 to 59 is NMP; sequence STGDMFRAAMANQTEMGRLAKSYIDKGELV. Residues Thr31, Arg36, 57 to 59, 86 to 89, and Gln93 each bind AMP; these read ELV and GYPR. Residues 127 to 159 are LID; sequence GRIINRKTGETFHKVFNPPVDYKEEDYYQREDD. ATP-binding positions include Arg128 and 137–138; that span reads TF. AMP contacts are provided by Arg156 and Arg167. ATP is bound at residue Gln195.

This sequence belongs to the adenylate kinase family. Monomer.

It localises to the cytoplasm. It catalyses the reaction AMP + ATP = 2 ADP. It functions in the pathway purine metabolism; AMP biosynthesis via salvage pathway; AMP from ADP: step 1/1. Functionally, catalyzes the reversible transfer of the terminal phosphate group between ATP and AMP. Plays an important role in cellular energy homeostasis and in adenine nucleotide metabolism. This Streptococcus pyogenes serotype M3 (strain ATCC BAA-595 / MGAS315) protein is Adenylate kinase.